Here is a 194-residue protein sequence, read N- to C-terminus: dTTP/UTP pyrophosphatase (194 aa).

Asp66 serves as the catalytic Proton acceptor.

This sequence belongs to the Maf family. YhdE subfamily. A divalent metal cation is required as a cofactor.

The protein localises to the cytoplasm. The enzyme catalyses dTTP + H2O = dTMP + diphosphate + H(+). The catalysed reaction is UTP + H2O = UMP + diphosphate + H(+). Its function is as follows. Nucleoside triphosphate pyrophosphatase that hydrolyzes dTTP and UTP. May have a dual role in cell division arrest and in preventing the incorporation of modified nucleotides into cellular nucleic acids. The chain is dTTP/UTP pyrophosphatase from Anaeromyxobacter dehalogenans (strain 2CP-C).